The sequence spans 337 residues: MQFIDYVKIYVKAGDGGRGCISFRREKYVPKGGPDGGDGGKGGDVIIQASSELHTLLDHRYQKVYKAQRGQHGKGSNMKGKDGENLIIKVPVGTVVKDAETEEVLADLDEEEKYFIVAKGGRGGFGNAHFATPTNQAPRYAQPGEKGQERWVILELKLLADVGLIGLPNAGKSTLISVISSAKPKIADYPFTTLIPVLGVVKYENYQSFVVADIPGLIEGAHKGAGLGHQFLRHVERTSLLLHLVDVSDFSESDPREDFEKIQKELELYNPALTKKPFAVVGTKIDIAYKGDRLGKLKKYCEEKGIDFFPISAVKKEGIDKLLHYLSEKVGKKCGLL.

An Obg domain is found at 1–159; it reads MQFIDYVKIY…RWVILELKLL (159 aa). The 172-residue stretch at 160 to 331 folds into the OBG-type G domain; it reads ADVGLIGLPN…LLHYLSEKVG (172 aa). Residues 166–173, 191–195, 213–216, 283–286, and 312–314 each bind GTP; these read GLPNAGKS, FTTLI, DIPG, TKID, and SAV. Residues Ser173 and Thr193 each contribute to the Mg(2+) site.

Belongs to the TRAFAC class OBG-HflX-like GTPase superfamily. OBG GTPase family. As to quaternary structure, monomer. Mg(2+) serves as cofactor.

Its subcellular location is the cytoplasm. Functionally, an essential GTPase which binds GTP, GDP and possibly (p)ppGpp with moderate affinity, with high nucleotide exchange rates and a fairly low GTP hydrolysis rate. Plays a role in control of the cell cycle, stress response, ribosome biogenesis and in those bacteria that undergo differentiation, in morphogenesis control. This chain is GTPase Obg, found in Thermodesulfovibrio yellowstonii (strain ATCC 51303 / DSM 11347 / YP87).